A 710-amino-acid chain; its full sequence is Polyribonucleotide nucleotidyltransferase (710 aa).

Mg(2+) is bound by residues Asp-489 and Asp-495. Residues 556-615 enclose the KH domain; that stretch reads PKIDTIKIDVDKIKVVIGKGGETIDKIIAETGVKIDIDDEGNVSIYSSDQAAINRTKEII. Residues 625–693 enclose the S1 motif domain; that stretch reads GEVYHAKVVR…EKGRVDASMK (69 aa). The segment at 691-710 is disordered; sequence SMKALIPRPPKPEKKEEKHD. The span at 700–710 shows a compositional bias: basic and acidic residues; the sequence is PKPEKKEEKHD.

Requires Mg(2+) as cofactor.

Its subcellular location is the cytoplasm. It catalyses the reaction RNA(n+1) + phosphate = RNA(n) + a ribonucleoside 5'-diphosphate. In terms of biological role, involved in mRNA degradation. Catalyzes the phosphorolysis of single-stranded polyribonucleotides processively in the 3'- to 5'-direction. The protein is Polyribonucleotide nucleotidyltransferase of Streptococcus pyogenes serotype M6 (strain ATCC BAA-946 / MGAS10394).